The primary structure comprises 942 residues: Protein O-mannosyl-transferase TMTC1 (942 aa).

At 1-20 (MLVTRGDRGGGERAPSRRPR) the chain is on the cytoplasmic side. A helical membrane pass occupies residues 21–41 (CGLVPAGAAALLAGASCLCYG). Topologically, residues 42-109 (RSLRGEFVHD…RLNIFLTGMN (68 aa)) are extracellular. A helical membrane pass occupies residues 110–130 (PFYFHAVNVILHCLVTLVLMY). At 131–140 (TCDKTVFKNR) the chain is on the cytoplasmic side. The helical transmembrane segment at 141-157 (GLAFVTALLFAVHPVHT) threads the bilayer. Residues 158-159 (EA) are Extracellular-facing. A helical membrane pass occupies residues 160–180 (VAGIVGRADVLACLLFLLAFL). Topologically, residues 181 to 196 (SYQRSLDQGCAGQCFP) are cytoplasmic. A helical membrane pass occupies residues 197–217 (TTASPFFLLLSLFLGTCAMLV). Over 218 to 331 (KETGITVFGV…LLTLRPFLKR (114 aa)) the chain is Extracellular. Positions 245–285 (NGAVCQHSSGQPGSPQPSSQQAHPHRESRKQRFPHKDSWGG) are disordered. The segment covering 250 to 266 (QHSSGQPGSPQPSSQQA) has biased composition (low complexity). A helical transmembrane segment spans residues 332-352 (AILVISYVTVILYFRLWIMGG). The Cytoplasmic portion of the chain corresponds to 353 to 373 (TMPLFSEQDNPASFSPYILTR). Residues 374 to 394 (FLTYSYLLAFNVWLLLAPITL) form a helical membrane-spanning segment. Over 395–414 (CYDWQVGSIPLVETIWDVRN) the chain is Extracellular. The helical transmembrane segment at 415-435 (LATILLAVVMALLSLHCVAAF) threads the bilayer. Residues 436 to 441 (KRLEHK) are Cytoplasmic-facing. A helical transmembrane segment spans residues 442–462 (EVLAGLLFLVFPFIPASNLFF). Position 463 (arginine 463) is a topological domain, extracellular. A helical transmembrane segment spans residues 464–484 (VGFVVAERVLYMPSMGYCILF). Over 485–498 (VHGLSKLCAGLSRC) the chain is Cytoplasmic. A helical transmembrane segment spans residues 499–519 (GATSLMASTVLLLLLFSWKTV). Residues 520–942 (KQNEIWLSRE…LQEVRERDQT (423 aa)) lie on the Extracellular side of the membrane. TPR repeat units lie at residues 543-576 (AKVH…YPRH), 577-607 (ASAL…HPQH), 608-641 (NRAL…GPDF), 642-675 (ADAY…CPDS), 676-709 (SDLH…SPSH), 710-742 (HVAV…VART), 743-776 (AEVL…QPSQ), 777-810 (RELR…EPRC), 811-844 (LECY…KPKD), 849-882 (SELF…DPDQ), and 883-916 (AQAW…VPDS).

It belongs to the TMTC family. In terms of assembly, may interact with FAM168B.

Its subcellular location is the membrane. It is found in the endoplasmic reticulum. The catalysed reaction is a di-trans,poly-cis-dolichyl beta-D-mannosyl phosphate + L-seryl-[protein] = 3-O-(alpha-D-mannosyl)-L-seryl-[protein] + a di-trans,poly-cis-dolichyl phosphate + H(+). It carries out the reaction a di-trans,poly-cis-dolichyl beta-D-mannosyl phosphate + L-threonyl-[protein] = 3-O-(alpha-D-mannosyl)-L-threonyl-[protein] + a di-trans,poly-cis-dolichyl phosphate + H(+). It participates in protein modification; protein glycosylation. Transfers mannosyl residues to the hydroxyl group of serine or threonine residues. The 4 members of the TMTC family are O-mannosyl-transferases dedicated primarily to the cadherin superfamily, each member seems to have a distinct role in decorating the cadherin domains with O-linked mannose glycans at specific regions. Also acts as O-mannosyl-transferase on other proteins such as PDIA3. This chain is Protein O-mannosyl-transferase TMTC1, found in Mus musculus (Mouse).